A 661-amino-acid polypeptide reads, in one-letter code: Transketolase (661 aa).

N-acetylserine is present on serine 2. Histidine 31 serves as a coordination point for substrate. Residues histidine 71 and 119–121 (GPL) each bind thiamine diphosphate. A Mg(2+)-binding site is contributed by aspartate 160. Residues glycine 161 and asparagine 190 each coordinate thiamine diphosphate. Asparagine 190 and valine 192 together coordinate Mg(2+). Residues histidine 267, arginine 359, and serine 386 each contribute to the substrate site. Residue histidine 267 participates in thiamine diphosphate binding. Residue glutamate 413 is the Proton donor of the active site. Residue phenylalanine 439 participates in thiamine diphosphate binding. The substrate site is built by histidine 463, aspartate 471, and arginine 522.

The protein belongs to the transketolase family. As to quaternary structure, homodimer. Mg(2+) serves as cofactor. Requires Ca(2+) as cofactor. The cofactor is Mn(2+). It depends on Co(2+) as a cofactor. Thiamine diphosphate is required as a cofactor.

It carries out the reaction D-sedoheptulose 7-phosphate + D-glyceraldehyde 3-phosphate = aldehydo-D-ribose 5-phosphate + D-xylulose 5-phosphate. Functionally, catalyzes the transfer of a two-carbon ketol group from a ketose donor to an aldose acceptor, via a covalent intermediate with the cofactor thiamine pyrophosphate. This Dictyostelium discoideum (Social amoeba) protein is Transketolase (tkt-1).